The primary structure comprises 390 residues: Formate-dependent phosphoribosylglycinamide formyltransferase (390 aa).

N(1)-(5-phospho-beta-D-ribosyl)glycinamide-binding positions include 19 to 20 (EL) and glutamate 79. Residues arginine 111, lysine 152, 157–162 (SSGKGQ), 192–195 (EGFV), and glutamate 200 each bind ATP. The 190-residue stretch at 116–305 (RLAAEELGLP…EFAIHARAIL (190 aa)) folds into the ATP-grasp domain. Mg(2+)-binding residues include glutamate 264 and glutamate 276. N(1)-(5-phospho-beta-D-ribosyl)glycinamide-binding positions include aspartate 283, lysine 353, and 360-361 (RR).

It belongs to the PurK/PurT family. In terms of assembly, homodimer.

It catalyses the reaction N(1)-(5-phospho-beta-D-ribosyl)glycinamide + formate + ATP = N(2)-formyl-N(1)-(5-phospho-beta-D-ribosyl)glycinamide + ADP + phosphate + H(+). It participates in purine metabolism; IMP biosynthesis via de novo pathway; N(2)-formyl-N(1)-(5-phospho-D-ribosyl)glycinamide from N(1)-(5-phospho-D-ribosyl)glycinamide (formate route): step 1/1. In terms of biological role, involved in the de novo purine biosynthesis. Catalyzes the transfer of formate to 5-phospho-ribosyl-glycinamide (GAR), producing 5-phospho-ribosyl-N-formylglycinamide (FGAR). Formate is provided by PurU via hydrolysis of 10-formyl-tetrahydrofolate. The protein is Formate-dependent phosphoribosylglycinamide formyltransferase of Marinobacter nauticus (strain ATCC 700491 / DSM 11845 / VT8) (Marinobacter aquaeolei).